The chain runs to 260 residues: Acyl-coenzyme A diphosphatase FITM2 (260 aa).

Residues 1–23 (MERLENCAQMFQRKFLNEAFRRH) lie on the Cytoplasmic side of the membrane. A helical membrane pass occupies residues 24 to 44 (CPVLLACIALGGSLLKELSPL). Topologically, residues 45-57 (PDSYWNNKRNVLN) are lumenal. A helical transmembrane segment spans residues 58–78 (VYFVKFCWGWTLWLLLPFITL). The Cytoplasmic portion of the chain corresponds to 79-93 (TNYKLTGSITKVLRR). A helical membrane pass occupies residues 94–114 (LSSLLVGTLFWYLCTNLFLYI). Residues 115–144 (EHITGSCYESEALLDSIEHQDRKECRLHGG) are Lumenal-facing. The helical transmembrane segment at 145–165 (FWHGFDISGHCFLLSYCILII) threads the bilayer. Residue His154 is part of the active site. Over 166–189 (LEETSVIRSIQFERHWHRMAINAQ) the chain is Cytoplasmic. The next 2 helical transmembrane spans lie at 190-210 (FTALSILVIIWVWMFLCTAVY) and 211-231 (FHNIFQKVIGTAFGMLAWYIT). Residue His212 is part of the active site. At 232-260 (YRWWYLQPISPGLPPASASHSEKEPVYKN) the chain is on the cytoplasmic side.

It belongs to the FIT family. FIT2 subfamily.

The protein localises to the endoplasmic reticulum membrane. The enzyme catalyses an acyl-CoA + H2O = an acyl-4'-phosphopantetheine + adenosine 3',5'-bisphosphate + 2 H(+). In terms of biological role, fatty acyl-coenzyme A (CoA) diphosphatase that hydrolyzes fatty acyl-CoA to yield acyl-4'-phosphopantetheine and adenosine 3',5'-bisphosphate. Preferentially hydrolyzes unsaturated long-chain acyl-CoA substrates in the endoplasmic reticulum (ER) lumen. This catalytic activity is required for maintaining ER structure and for lipid droplets (LDs) biogenesis, which are lipid storage organelles involved in maintaining lipid and energy homeostasis. May directly bind to diacylglycerol (DAGs) and triacylglycerol, which is also important for LD biogenesis. May support directional budding of nacent LDs from the ER into the cytosol by reducing DAG levels at sites of LD formation. May play a role in the regulation of cell morphology, ER morphology and cytoskeletal organization. The protein is Acyl-coenzyme A diphosphatase FITM2 of Xenopus laevis (African clawed frog).